A 253-amino-acid polypeptide reads, in one-letter code: Ubiquinone/menaquinone biosynthesis C-methyltransferase UbiE (253 aa).

S-adenosyl-L-methionine contacts are provided by residues Thr-76, Asp-97, and 125–126 (DA).

Belongs to the class I-like SAM-binding methyltransferase superfamily. MenG/UbiE family.

The catalysed reaction is a 2-demethylmenaquinol + S-adenosyl-L-methionine = a menaquinol + S-adenosyl-L-homocysteine + H(+). The enzyme catalyses a 2-methoxy-6-(all-trans-polyprenyl)benzene-1,4-diol + S-adenosyl-L-methionine = a 5-methoxy-2-methyl-3-(all-trans-polyprenyl)benzene-1,4-diol + S-adenosyl-L-homocysteine + H(+). The protein operates within quinol/quinone metabolism; menaquinone biosynthesis; menaquinol from 1,4-dihydroxy-2-naphthoate: step 2/2. Its pathway is cofactor biosynthesis; ubiquinone biosynthesis. In terms of biological role, methyltransferase required for the conversion of demethylmenaquinol (DMKH2) to menaquinol (MKH2) and the conversion of 2-polyprenyl-6-methoxy-1,4-benzoquinol (DDMQH2) to 2-polyprenyl-3-methyl-6-methoxy-1,4-benzoquinol (DMQH2). In Azotobacter vinelandii (strain DJ / ATCC BAA-1303), this protein is Ubiquinone/menaquinone biosynthesis C-methyltransferase UbiE.